Consider the following 491-residue polypeptide: Ribonuclease G (491 aa).

Residues 40-129 (GNIYKGRVTR…LTTDITLPSR (90 aa)) form the S1 motif domain. The Mg(2+) site is built by Asp305 and Asp348.

The protein belongs to the RNase E/G family. RNase G subfamily. In terms of assembly, homodimer, in equilibrium with possible higher multimers. Mg(2+) serves as cofactor.

Its subcellular location is the cytoplasm. An endonuclease that acts in the processing of the 5'-end of 16S rRNA and 23S rRNA. It prefers 5'-monophosphorylated substrates and cleaves single-stranded sites rich in A and U residues; contributes to tRNA processing and mRNA turnover. This chain is Ribonuclease G (rng), found in Haemophilus influenzae (strain ATCC 51907 / DSM 11121 / KW20 / Rd).